Here is a 371-residue protein sequence, read N- to C-terminus: Alanine racemase (371 aa).

Lysine 39 functions as the Proton acceptor; specific for D-alanine in the catalytic mechanism. An N6-(pyridoxal phosphate)lysine modification is found at lysine 39. Substrate is bound at residue arginine 137. The active-site Proton acceptor; specific for L-alanine is the tyrosine 266. Substrate is bound at residue methionine 314.

Belongs to the alanine racemase family. Pyridoxal 5'-phosphate is required as a cofactor.

The enzyme catalyses L-alanine = D-alanine. It participates in amino-acid biosynthesis; D-alanine biosynthesis; D-alanine from L-alanine: step 1/1. Functionally, catalyzes the interconversion of L-alanine and D-alanine. May also act on other amino acids. The sequence is that of Alanine racemase (alr) from Desulfovibrio desulfuricans (strain ATCC 27774 / DSM 6949 / MB).